We begin with the raw amino-acid sequence, 224 residues long: Holliday junction branch migration complex subunit RuvA (224 aa).

The domain I stretch occupies residues 1–64 (MIGKVAGILD…EDLLQLFGFP (64 aa)). Residues 65 to 143 (TMIEKEWHRL…ALMAMGGGTA (79 aa)) form a domain II region. Residues 141–185 (GTAALAPSEPPEPEPGTSSGSRRKTRAPEPPRPSHTADALSALAN) form a disordered region. Residues 144 to 170 (ALAPSEPPEPEPGTSSGSRRKTRAPEP) are flexible linker. The domain III stretch occupies residues 171–224 (PRPSHTADALSALANLGYQPTDAAQAVAQAAGESPDADTAALIRAALKLLAPKS).

Belongs to the RuvA family. Homotetramer. Forms an RuvA(8)-RuvB(12)-Holliday junction (HJ) complex. HJ DNA is sandwiched between 2 RuvA tetramers; dsDNA enters through RuvA and exits via RuvB. An RuvB hexamer assembles on each DNA strand where it exits the tetramer. Each RuvB hexamer is contacted by two RuvA subunits (via domain III) on 2 adjacent RuvB subunits; this complex drives branch migration. In the full resolvosome a probable DNA-RuvA(4)-RuvB(12)-RuvC(2) complex forms which resolves the HJ.

The protein localises to the cytoplasm. The RuvA-RuvB-RuvC complex processes Holliday junction (HJ) DNA during genetic recombination and DNA repair, while the RuvA-RuvB complex plays an important role in the rescue of blocked DNA replication forks via replication fork reversal (RFR). RuvA specifically binds to HJ cruciform DNA, conferring on it an open structure. The RuvB hexamer acts as an ATP-dependent pump, pulling dsDNA into and through the RuvAB complex. HJ branch migration allows RuvC to scan DNA until it finds its consensus sequence, where it cleaves and resolves the cruciform DNA. This chain is Holliday junction branch migration complex subunit RuvA, found in Cereibacter sphaeroides (strain ATCC 17029 / ATH 2.4.9) (Rhodobacter sphaeroides).